The sequence spans 175 residues: ATP synthase subunit b (175 aa).

A helical membrane pass occupies residues Leu20–Trp40.

Belongs to the ATPase B chain family. In terms of assembly, F-type ATPases have 2 components, F(1) - the catalytic core - and F(0) - the membrane proton channel. F(1) has five subunits: alpha(3), beta(3), gamma(1), delta(1), epsilon(1). F(0) has four main subunits: a(1), b(2) and c(10-14). The alpha and beta chains form an alternating ring which encloses part of the gamma chain. F(1) is attached to F(0) by a central stalk formed by the gamma and epsilon chains, while a peripheral stalk is formed by the delta and b chains.

It is found in the cell inner membrane. Functionally, f(1)F(0) ATP synthase produces ATP from ADP in the presence of a proton or sodium gradient. F-type ATPases consist of two structural domains, F(1) containing the extramembraneous catalytic core and F(0) containing the membrane proton channel, linked together by a central stalk and a peripheral stalk. During catalysis, ATP synthesis in the catalytic domain of F(1) is coupled via a rotary mechanism of the central stalk subunits to proton translocation. Its function is as follows. Component of the F(0) channel, it forms part of the peripheral stalk, linking F(1) to F(0). This Chlorobium chlorochromatii (strain CaD3) protein is ATP synthase subunit b.